The sequence spans 194 residues: Cytochrome bo(3) ubiquinol oxidase subunit 3 (194 aa).

At 1-18 (MKKKYKIDTNIFSKELLG) the chain is on the cytoplasmic side. The helical transmembrane segment at 19–41 (FWLYLMSDCIIFCTLFSVYFILV) threads the bilayer. The Extracellular segment spans residues 42–55 (DNVAQGPSGHNIFQ). The helical transmembrane segment at 56-78 (NNLIIIETFLLLFSSFSCNLVLF) threads the bilayer. The Cytoplasmic portion of the chain corresponds to 79-84 (EMKNKN). The helical transmembrane segment at 85-107 (LYMVFLWLGITFLLGLLFVFLEL) threads the bilayer. The Extracellular portion of the chain corresponds to 108–126 (FEFFHLINLGFGPTRSGFL). The helical transmembrane segment at 127–149 (SSFFVLIATHGIHVISGLIWIIV) threads the bilayer. Over 150-169 (MIKYVYTFNITNLIYYRMLC) the chain is Cytoplasmic. The helical transmembrane segment at 170-192 (LNLFWHFLDIVWVFIFSFVYLFG) threads the bilayer. The Extracellular segment spans residues 193–194 (MV).

This sequence belongs to the cytochrome c oxidase subunit 3 family. In terms of assembly, heterooctamer of two A chains, two B chains, two C chains and two D chains.

It is found in the cell membrane. Its function is as follows. Cytochrome bo(3) ubiquinol terminal oxidase is the component of the aerobic respiratory chain of E.coli that predominates when cells are grown at high aeration. Has proton pump activity across the membrane in addition to electron transfer, pumping 2 protons/electron. The sequence is that of Cytochrome bo(3) ubiquinol oxidase subunit 3 (cyoC) from Buchnera aphidicola subsp. Baizongia pistaciae (strain Bp).